A 1537-amino-acid polypeptide reads, in one-letter code: Isocyanide synthase-NRPS hybrid crmA (1537 aa).

The tract at residues 1–502 (MFHKEAGISH…CVKAGYAALF (502 aa)) is isocyanide synthase domain. The segment at 351-391 (PSVPVSPGMSSPSAASTSSSGASMQGSAATTPETHSPPTFT) is disordered. Positions 352 to 381 (SVPVSPGMSSPSAASTSSSGASMQGSAATT) are enriched in low complexity. The span at 382 to 391 (PETHSPPTFT) shows a compositional bias: polar residues. Positions 573-752 (EAINDPFCFL…GNLIPPREDW (180 aa)) are adenylation. In terms of domain architecture, Carrier spans 941 to 1019 (SSAHSIEDNV…RLSAIIALLA (79 aa)). At serine 977 the chain carries O-(pantetheine 4'-phosphoryl)serine. Positions 1293–1526 (RCLKTTMFLV…LEMLVTDEEF (234 aa)) are transferase.

The protein in the N-terminal section; belongs to the isocyanide synthase family. It in the C-terminal section; belongs to the NRP synthetase family.

The protein operates within secondary metabolite biosynthesis. In terms of biological role, isocyanide synthase-NRPS hybrid; part of the crm gene cluster that mediates the biosynthesis of a yet unidentified copper-responsive metabolite. Converts valine into valine isocyanide that then contributes to two distinct biosynthetic pathways under copper-limiting conditions. Reaction of valine isocyanide with the imine intermediate of festuclavine results in formation of the amide bond in fumivaline A. In addition, valine isocyanide contributes to biosynthesis of a family of acylated sugar alcohols, the D-mannitol-derived fumicicolins. CrmA and associated products inhibit microbial growth from copper-starved A.fumigatus. The chain is Isocyanide synthase-NRPS hybrid crmA from Aspergillus fumigatus (strain ATCC MYA-4609 / CBS 101355 / FGSC A1100 / Af293) (Neosartorya fumigata).